Consider the following 515-residue polypeptide: Recombining binding protein suppressor of hairless-like protein (515 aa).

The segment at 1–40 (MDPRETTDPSLPPGPLTHLSLPDSSEVRLQSDGPSLLGSW) is disordered. DNA-binding stretches follow at residues 76–86 (QKSYGNEKRFF), 191–196 (SKPSQK), and 218–223 (RLRSQT). One can recognise an IPT/TIG domain in the interval 384–474 (PLISTLELSG…YPSPFSFTYT (91 aa)).

The protein belongs to the Su(H) family. Interacts weakly with EBNA2. Does not interact with any Notch proteins. As to expression, highly expressed in lung. Also detected in spleen, and brain.

Its subcellular location is the nucleus. Putative transcription factor, which cooperates with EBNA2 to activate transcription. This Mus musculus (Mouse) protein is Recombining binding protein suppressor of hairless-like protein (Rbpjl).